Reading from the N-terminus, the 88-residue chain is Toxin RelE2 (88 aa).

This sequence belongs to the RelE toxin family.

Toxic component of a type II toxin-antitoxin (TA) system. Its toxic effect is neutralized by coexpression with cognate antitoxin RelB2 but no other ParD or RelB antitoxin. In Caulobacter vibrioides (strain ATCC 19089 / CIP 103742 / CB 15) (Caulobacter crescentus), this protein is Toxin RelE2 (relE2).